The following is a 463-amino-acid chain: L-seryl-tRNA(Sec) selenium transferase (463 aa).

Residue K295 is modified to N6-(pyridoxal phosphate)lysine.

It belongs to the SelA family. In terms of assembly, homodecamer; pentamer of dimers. Binds only one seryl-tRNA(Sec) per dimer. The cofactor is pyridoxal 5'-phosphate.

It is found in the cytoplasm. The catalysed reaction is L-seryl-tRNA(Sec) + selenophosphate + H(+) = L-selenocysteinyl-tRNA(Sec) + phosphate. Its pathway is aminoacyl-tRNA biosynthesis; selenocysteinyl-tRNA(Sec) biosynthesis; selenocysteinyl-tRNA(Sec) from L-seryl-tRNA(Sec) (bacterial route): step 1/1. In terms of biological role, converts seryl-tRNA(Sec) to selenocysteinyl-tRNA(Sec) required for selenoprotein biosynthesis. In Escherichia coli O7:K1 (strain IAI39 / ExPEC), this protein is L-seryl-tRNA(Sec) selenium transferase.